We begin with the raw amino-acid sequence, 271 residues long: ATP synthase subunit a (271 aa).

5 consecutive transmembrane segments (helical) span residues 38–58 (FWTL…LFLV), 100–120 (LIAP…LMDL), 146–166 (DVNI…FYSI), 220–240 (LIFI…LNVP), and 242–262 (AIFH…LTIV).

This sequence belongs to the ATPase A chain family. As to quaternary structure, F-type ATPases have 2 components, CF(1) - the catalytic core - and CF(0) - the membrane proton channel. CF(1) has five subunits: alpha(3), beta(3), gamma(1), delta(1), epsilon(1). CF(0) has three main subunits: a(1), b(2) and c(9-12). The alpha and beta chains form an alternating ring which encloses part of the gamma chain. CF(1) is attached to CF(0) by a central stalk formed by the gamma and epsilon chains, while a peripheral stalk is formed by the delta and b chains.

The protein localises to the cell inner membrane. Functionally, key component of the proton channel; it plays a direct role in the translocation of protons across the membrane. This chain is ATP synthase subunit a, found in Salmonella arizonae (strain ATCC BAA-731 / CDC346-86 / RSK2980).